A 630-amino-acid polypeptide reads, in one-letter code: Protein mono-ADP-ribosyltransferase PARP6 (630 aa).

Cys-237 bears the ADP-ribosylcysteine mark. Residues 394–620 enclose the PARP catalytic domain; the sequence is EMTQGSYLEI…QDPKIQKEIM (227 aa). Asp-600 bears the ADP-ribosyl aspartic acid mark.

It belongs to the ARTD/PARP family. In terms of processing, auto-mono-ADP-ribosylated.

It catalyses the reaction L-aspartyl-[protein] + NAD(+) = 4-O-(ADP-D-ribosyl)-L-aspartyl-[protein] + nicotinamide. The enzyme catalyses L-cysteinyl-[protein] + NAD(+) = S-(ADP-D-ribosyl)-L-cysteinyl-[protein] + nicotinamide + H(+). In terms of biological role, mono-ADP-ribosyltransferase that mediates mono-ADP-ribosylation of target proteins. The chain is Protein mono-ADP-ribosyltransferase PARP6 from Mus musculus (Mouse).